Reading from the N-terminus, the 620-residue chain is Chaperone protein HscA homolog (620 aa).

Belongs to the heat shock protein 70 family.

Chaperone involved in the maturation of iron-sulfur cluster-containing proteins. Has a low intrinsic ATPase activity which is markedly stimulated by HscB. In Shewanella woodyi (strain ATCC 51908 / MS32), this protein is Chaperone protein HscA homolog.